Reading from the N-terminus, the 562-residue chain is Tissue-type plasminogen activator (562 aa).

Residues 1-20 form the signal peptide; that stretch reads MNAMKRGLCCVLLLCGAVFA. The propeptide occupies 21-32; sequence LPSQEIHARVRR. Residues 33 to 35 constitute a propeptide, removed by plasmin; the sequence is GAR. The region spanning 39–81 is the Fibronectin type-I domain; sequence VICRDEKTQMIYQQHQSWLRPVLRSNRVEYCWCNSGRAQCHSV. Intrachain disulfides connect Cys41–Cys71, Cys69–Cys78, Cys86–Cys97, Cys91–Cys108, Cys110–Cys119, Cys127–Cys208, Cys148–Cys190, Cys179–Cys203, Cys215–Cys296, Cys236–Cys278, Cys267–Cys291, Cys299–Cys430, Cys342–Cys358, Cys350–Cys419, Cys444–Cys519, Cys476–Cys492, and Cys509–Cys537. Positions 42–52 are important for binding to annexin A2; it reads RDEKTQMIYQQ. The region spanning 82-120 is the EGF-like domain; the sequence is PVRSCSEPRCFNGGTCQQALYFSDFVCQCPEGFAGKCCE. O-linked (Fuc) threonine glycosylation occurs at Thr96. Kringle domains are found at residues 126-208 and 214-296; these read TCYE…TPAC and DCYF…VPSC. A glycan (N-linked (GlcNAc...) asparagine) is linked at Asn152. The region spanning 311–561 is the Peptidase S1 domain; it reads IKGGLFADIA…YLDWIHDNMR (251 aa). Residues His357 and Asp406 each act as charge relay system in the active site. Asn483 carries N-linked (GlcNAc...) asparagine glycosylation. Ser513 acts as the Charge relay system in catalysis.

The protein belongs to the peptidase S1 family. As to quaternary structure, heterodimer of chain A and chain B held by a disulfide bond. Binds to fibrin with high affinity. This interaction leads to an increase in the catalytic efficiency of the enzyme due to an increase in affinity for plasminogen. Similarly, binding to heparin increases the activation of plasminogen. Binds to annexin A2, cytokeratin-8, fibronectin and laminin. Binds to mannose receptor and the low-density lipoprotein receptor-related protein (LRP1); these proteins are involved in TPA clearance. Binds LRP1B; binding is followed by internalization and degradation. Forms heterodimer with SERPINA5. Interacts with SERPINE1. In complex with SERPINE1, interacts with SORL1. In terms of processing, the single chain, almost fully active enzyme, can be further processed into a two-chain fully active form by a cleavage after Arg-310 catalyzed by plasmin, tissue kallikrein or factor Xa.

Its subcellular location is the secreted. The protein localises to the extracellular space. The catalysed reaction is Specific cleavage of Arg-|-Val bond in plasminogen to form plasmin.. Its activity is regulated as follows. Inhibited by SERPINA5. Inhibited by SERPINE1. In terms of biological role, converts the abundant, but inactive, zymogen plasminogen to plasmin by hydrolyzing a single Arg-Val bond in plasminogen. By controlling plasmin-mediated proteolysis, it plays an important role in tissue remodeling and degradation, in cell migration and many other physiopathological events. During oocyte activation, plays a role in cortical granule reaction in the zona reaction, which contributes to the block to polyspermy. This chain is Tissue-type plasminogen activator (PLAT), found in Pongo abelii (Sumatran orangutan).